Consider the following 278-residue polypeptide: Coiled-coil domain-containing protein 121 (278 aa).

Coiled-coil stretches lie at residues 1–30 (MTDLNKHIKQAQTQRKQLLEESRELHREKL) and 105–243 (QAMR…LIQA). The interval 253–278 (QCLNRQDVPKTTPSLPQGTKSRINPK) is disordered.

This Homo sapiens (Human) protein is Coiled-coil domain-containing protein 121 (CCDC121).